Reading from the N-terminus, the 194-residue chain is Porimin (194 aa).

Positions 1-24 are cleaved as a signal peptide; the sequence is MALCARAALLLGALQVLALPGAVA. The Extracellular portion of the chain corresponds to 25–151; it reads QETYAQGSPS…PTKGKGSKFD (127 aa). Asparagine 36, asparagine 47, asparagine 51, asparagine 59, asparagine 76, and asparagine 114 each carry an N-linked (GlcNAc...) asparagine glycan. Positions 88–124 are disordered; it reads KVSTPGVSPHVTPSASKSTPKTSASPNSTQTSASMTT. A compositionally biased stretch (low complexity) spans 99-124; sequence TPSASKSTPKTSASPNSTQTSASMTT. The helical transmembrane segment at 152 to 172 threads the bilayer; that stretch reads AGSFVGGIVLTLGVLSILYIG. The Cytoplasmic segment spans residues 173 to 194; sequence CKMYYSRRGIRYRSIDEHDAII. A Phosphoserine modification is found at serine 186.

This sequence belongs to the CD164 family.

The protein resides in the membrane. Functionally, implicated in oncotic cell death, characterized by cell swelling, organelle swelling, vacuolization and increased membrane permeability. The chain is Porimin (Tmem123) from Rattus norvegicus (Rat).